Consider the following 58-residue polypeptide: Small ribosomal subunit protein bS21 (58 aa).

This sequence belongs to the bacterial ribosomal protein bS21 family.

The protein is Small ribosomal subunit protein bS21 of Streptococcus pyogenes serotype M49 (strain NZ131).